Here is a 172-residue protein sequence, read N- to C-terminus: Translationally-controlled tumor protein (172 aa).

In terms of domain architecture, TCTP spans 1–172; the sequence is MIIYRDLISH…FKDGLEMEKC (172 aa). A Phosphoserine; by PLK1 modification is found at Ser-46. Residue Ser-53 is modified to Phosphoserine. Ser-64 bears the Phosphoserine; by PLK1 mark. The interval 70–172 is required for reduction of TSC22D1 protein stability; it reads VDIVMNHHLQ…FKDGLEMEKC (103 aa).

Belongs to the TCTP family. In terms of assembly, homodimer. Interacts with STEAP3. Interacts with TSC22D1; interaction results in the destabilization of TSC22D1 protein.

It is found in the cytoplasm. Functionally, involved in calcium binding and microtubule stabilization. Acts as a negative regulator of TSC22D1-mediated apoptosis, via interaction with and destabilization of TSC22D1 protein. The protein is Translationally-controlled tumor protein (TPT1) of Bos taurus (Bovine).